Reading from the N-terminus, the 376-residue chain is Thymidine kinase (376 aa).

Residues 1–39 are disordered; that stretch reads MASYPCHQHASAFDQAARSRGHSNRRTALRPRRQQEATE. Basic residues predominate over residues 19-32; it reads SRGHSNRRTALRPR. Residue 56 to 63 coordinates ATP; the sequence is GPHGMGKT. Catalysis depends on Glu83, which acts as the Proton acceptor. 2 residues coordinate substrate: Tyr101 and Gln125. Arg216 is an ATP binding site. Arg222 provides a ligand contact to substrate. Positions 260-280 are disordered; sequence GQLSGTAVPPQGAEPQSNAGP.

Belongs to the herpesviridae thymidine kinase family. As to quaternary structure, homodimer.

The enzyme catalyses thymidine + ATP = dTMP + ADP + H(+). Its function is as follows. Catalyzes the transfer of the gamma-phospho group of ATP to thymidine to generate dTMP in the salvage pathway of pyrimidine synthesis. The dTMP serves as a substrate for DNA polymerase during viral DNA replication. Allows the virus to be reactivated and to grow in non-proliferative cells lacking a high concentration of phosphorylated nucleic acid precursors. This is Thymidine kinase from Homo sapiens (Human).